The primary structure comprises 686 residues: Phosphatidylinositol 4,5-bisphosphate-binding protein SLM1 (686 aa).

Residues 33-147 (RSMTSADHAN…KQLQGKNSLT (115 aa)) form a disordered region. The span at 45–63 (QQQQQQQQQQQQQQQQQQQ) shows a compositional bias: low complexity. Over residues 64-126 (SASFQNGSLT…PNIDSNTNVT (63 aa)) the composition is skewed to polar residues. The segment covering 133–144 (NNNNGKQLQGKN) has biased composition (low complexity). Ser-145, Ser-150, and Ser-153 each carry phosphoserine. Residues 157 to 172 (SSLQRQRLAQQQQQQQ) show a composition bias toward low complexity. The disordered stretch occupies residues 157 to 176 (SSLQRQRLAQQQQQQQDPRS). A coiled-coil region spans residues 296–381 (RLEDLRRDLI…FLHEAFDNLE (86 aa)). A PH domain is found at 468 to 581 (YEIKSGFLER…WFDNLKILTS (114 aa)). The tract at residues 626-669 (VENDENDDINSNYVGSTVTPKLDNQTNTNTSMSSLPDTNDSELQ) is disordered. The span at 634-663 (INSNYVGSTVTPKLDNQTNTNTSMSSLPDT) shows a compositional bias: polar residues. A PXIXIT-like, required for interaction with CNA1 and CNA2, and calcineurin-dependent dephosphorylation motif is present at residues 673–678 (PNIYIQ).

As to quaternary structure, heterodimer of SLM1-SLM2. Binds phosphatidylinositol 4,5-bisphosphate, which is required for function. Interacts with the TORC2 subunits AVO2, BIT61 and TOR2. Interacts with the calcineurin catalytic subunits CNA1 and CNA2. Post-translationally, phosphorylated by the target of rapamycin complex 2 (TORC2) and dephosphorylated by serine/threonine-protein phosphatase 2B (calcineurin). Dephosphorylated in response to the disruption or inhibition of sphingolipid synthesis.

It is found in the cell membrane. Together with SLM2, acts as an effector of the TORC2- and calcineurin-signaling pathways. Phosphorylated and activated by TORC2 under favorable growth conditions. Mediates actin polarization via inhibition of calcineurin-dependent transcription. Upon nutrient limitation or environmental stress, gets dephosphorylated by calcineurin. Dephosphorylation inhibits its interaction with TORC2, thereby antagonizing TORC2 signaling and mediating calcineurin-dependent actin depolarization. May play a role in the response to the disruption of sphingolipid synthesis, where dephosphorylation of SLM1 leads to the activation and phosphorylation of YPK1 through the TORC2 and PKH1 pathways, which in turn phosphorylates ORM1 and LAG1 to activate sphingolipid synthesis. Also functions in heat-induced, calcineurin-mediated uracil permease (FUR4) endocytosis. This Saccharomyces cerevisiae (strain ATCC 204508 / S288c) (Baker's yeast) protein is Phosphatidylinositol 4,5-bisphosphate-binding protein SLM1 (SLM1).